A 311-amino-acid polypeptide reads, in one-letter code: Dermonecrotic toxin (311 aa).

The N-terminal stretch at 1 to 21 (MYVHLALILGCWTVVLQGAET) is a signal peptide. Residues 22 to 26 (DVGER) constitute a propeptide that is removed on maturation. Residue His38 is part of the active site. Positions 58 and 60 each coordinate Mg(2+). His73 functions as the Nucleophile in the catalytic mechanism. A disulfide bridge links Cys77 with Cys83. Asp117 contacts Mg(2+).

This sequence belongs to the arthropod phospholipase D family. Class I subfamily. The cofactor is Mg(2+). Expressed by the venom gland.

It localises to the secreted. The catalysed reaction is an N-(acyl)-sphingosylphosphocholine = an N-(acyl)-sphingosyl-1,3-cyclic phosphate + choline. It carries out the reaction an N-(acyl)-sphingosylphosphoethanolamine = an N-(acyl)-sphingosyl-1,3-cyclic phosphate + ethanolamine. The enzyme catalyses a 1-acyl-sn-glycero-3-phosphocholine = a 1-acyl-sn-glycero-2,3-cyclic phosphate + choline. It catalyses the reaction a 1-acyl-sn-glycero-3-phosphoethanolamine = a 1-acyl-sn-glycero-2,3-cyclic phosphate + ethanolamine. Catalytic activity and hemolysis are inhibited by divalent ion chelators (1,10-phenanthroline, EDTA, and EGTA). Dermonecrotic toxins cleave the phosphodiester linkage between the phosphate and headgroup of certain phospholipids (sphingolipid and lysolipid substrates), forming an alcohol (often choline) and a cyclic phosphate. This toxin acts on sphingomyelin (SM). It may also act on ceramide phosphoethanolamine (CPE), lysophosphatidylcholine (LPC) and lysophosphatidylethanolamine (LPE), but not on lysophosphatidylserine (LPS), and lysophosphatidylglycerol (LPG). It acts by transphosphatidylation, releasing exclusively cyclic phosphate products as second products. Shows complement-dependent hemolysis. Also induces dermonecrosis, vascular permeability, edema, inflammatory response, and platelet aggregation. This chain is Dermonecrotic toxin, found in Loxosceles laeta (South American recluse spider).